The sequence spans 670 residues: Probable E3 ubiquitin ligase complex SCF subunit sconB (670 aa).

The segment at 1 to 38 (MSSPPPFTSIFGGPAESAEEIDADADNSQLKPHNRSNV) is disordered. The segment covering 27–38 (NSQLKPHNRSNV) has biased composition (polar residues). The 47-residue stretch at 163-209 (IDFIAALPPEISFKILCYLDTTSLCKAAQVSRRWRALADDDVVWHRM) folds into the F-box domain. A disordered region spans residues 249-287 (VNGTSPKATPALPEDASPVADSSGTGKRKPEPSEEETAV). WD repeat units lie at residues 339–376 (GHTN…EIRT), 379–418 (GHES…STYT), 420–456 (HRGG…TCLL), 458–499 (GHTD…RTFH), 553–596 (ISQS…CLRT), 599–636 (GHLE…CERT), and 639–670 (GHSG…SFQS).

This sequence belongs to the WD repeat MET30/SCONB/SCON-2 family. Component of the SCF(sconB) E3 ubiquitin ligase complex.

The protein operates within protein modification; protein ubiquitination. Component of the SCF(sconB) E3 ubiquitin ligase complex involved in the regulation of sulfur metabolite repression, probably by mediating the inactivation or degradation of the metR transcription factor. The polypeptide is Probable E3 ubiquitin ligase complex SCF subunit sconB (sconB) (Aspergillus niger (strain ATCC MYA-4892 / CBS 513.88 / FGSC A1513)).